The sequence spans 462 residues: Nuclear distribution protein PAC1 (462 aa).

One can recognise a LisH domain in the interval 9 to 41 (QAEELHKAIIAYLGVINAPKTAAAFREEVNFSA). Positions 60–87 (TSVVRLQKKVLELEQRNQSLQSELDSTT) form a coiled coil. Polar residues predominate over residues 78–99 (SLQSELDSTTPTSLLRRNQDPS). The segment at 78 to 103 (SLQSELDSTTPTSLLRRNQDPSSWLP) is disordered. WD repeat units follow at residues 113–154 (SHRS…RTVK), 156–196 (HTKG…KNIR), 200–247 (GHDH…CVKT), 250–289 (GHADWVRDVSPSFDGRWLLSAGNDQTARLWDASSGEAKCT), 292–352 (GHEH…IKTL), 354–393 (GHDNWVRALIFHPGGKYLLSASDDKTIRCWDLTQEGRCVK), 398–445 (AHSH…AGIR), and 447–462 (VIATGCVDLNVRIFAS). The disordered stretch occupies residues 414–434 (KDAPTNGDAPNGTTANGASKK).

This sequence belongs to the WD repeat LIS1/nudF family. Self-associates. Interacts with NDL1 and dynein.

The protein resides in the cytoplasm. It is found in the cytoskeleton. The protein localises to the spindle pole. Functionally, positively regulates the activity of the minus-end directed microtubule motor protein dynein. May enhance dynein-mediated microtubule sliding by targeting dynein to the microtubule plus end. Required for nuclear migration during vegetative growth as well as development. Required for retrograde early endosome (EE) transport from the hyphal tip. Required for localization of dynein to the mitotic spindle poles. Recruits additional proteins to the dynein complex at SPBs. The polypeptide is Nuclear distribution protein PAC1 (Phaeosphaeria nodorum (strain SN15 / ATCC MYA-4574 / FGSC 10173) (Glume blotch fungus)).